We begin with the raw amino-acid sequence, 450 residues long: Enolase (450 aa).

A (2R)-2-phosphoglycerate-binding site is contributed by Gln-173. Catalysis depends on Glu-215, which acts as the Proton donor. Residues Asp-254, Glu-308, and Asp-335 each coordinate Mg(2+). Positions 360, 389, 390, and 411 each coordinate (2R)-2-phosphoglycerate. The active-site Proton acceptor is the Lys-360.

The protein belongs to the enolase family. It depends on Mg(2+) as a cofactor.

The protein localises to the cytoplasm. It is found in the secreted. It localises to the cell surface. The enzyme catalyses (2R)-2-phosphoglycerate = phosphoenolpyruvate + H2O. The protein operates within carbohydrate degradation; glycolysis; pyruvate from D-glyceraldehyde 3-phosphate: step 4/5. In terms of biological role, catalyzes the reversible conversion of 2-phosphoglycerate (2-PG) into phosphoenolpyruvate (PEP). It is essential for the degradation of carbohydrates via glycolysis. The chain is Enolase from Malacoplasma penetrans (strain HF-2) (Mycoplasma penetrans).